Reading from the N-terminus, the 258-residue chain is Cell division protein ZapD (258 aa).

This sequence belongs to the ZapD family. In terms of assembly, interacts with FtsZ.

It is found in the cytoplasm. In terms of biological role, cell division factor that enhances FtsZ-ring assembly. Directly interacts with FtsZ and promotes bundling of FtsZ protofilaments, with a reduction in FtsZ GTPase activity. This is Cell division protein ZapD from Coxiella burnetii (strain RSA 331 / Henzerling II).